The following is an 85-amino-acid chain: Large ribosomal subunit protein bL27 (85 aa).

The tract at residues 1–22 is disordered; it reads MAHKKAGGSTNNGRDSESKRLG.

It belongs to the bacterial ribosomal protein bL27 family.

This is Large ribosomal subunit protein bL27 from Vibrio atlanticus (strain LGP32) (Vibrio splendidus (strain Mel32)).